Consider the following 1065-residue polypeptide: MPHLPLASFRPPLWGLRPSWGLARPRALCTQPEPHGSPVSRRNREAKQKRLREKQAALEAGLAEKSKTPAVPTKAWSHKEVVLYEIPTRPGEKKDVSGPLPPAYSPQYVEAAWYQWWVREGFFKPEYQARLPQATGETFSMCIPPPNVTGSLHIGHALTVAIQDAFVRWHRMRGDRVLWIPGSDHAGIATQAVVEKQLWRERRVRRHELSREDFLRAVWQWKQEKGGEIYEQLCALGASLDWDRECFTMDAGSSAAVTEAFVRLYDLGLLYRNRQLVNWSCTLRSAISDIEVESRPLPGRTVLRLPGCPIPVSFGLLVSIAFPVDGDPGTEIVVGTTRPETLPGDVAVAVHPDDPRYTHLHGRQLRHPLTGQHLPLITDTTVQPHVGTGAVKVTPAHSPADAEMGTRHGLTPLSVIAEDGTMTSLCGDWLQGLHRFVAREKIMCTLRERGLFRGLQEHPMVLPICSRSGDVVEYLLKSQWFVRCQEMGDRAAKAVESGALELWPSFHQKSWQHWFAHIGDWCVSRQLWWGHQIPAYRVGGEKAEDDREECWVVGRSEAEARAAAAKQTGRPEAELTLERDPDVLDTWFSSALFPFSALGWPQETPDLARFYPLTLLETGSDLLTFWVGRMVMLGTQLTGQLPFSKVLLHSMVRDRQGRKMSKSLGNVLDPRDIISGQELQVLQAKLRDGNLDQGELAVAAAAQKKDFPYGIPECGTDALRFALCSHGILGGDLHLSVSEVLNYRHFCNKLWNALRFILRALGDDFVPQPAEKVTPSSPMDAWILSRLAFAANECERGFLSRELSLVTHTLYHFWLHNLCDVYLEAVKPVLSSAPCPPGPPQVLFSCADVGLRLLAPLMPFLAEELWQRLPPRQGGSMAPSICVAPYPSGHSLVSRGQESWRQPELEHCFSRVQEIVQALRALRATYQLTRARPHVLLQSSDPGEQGLVQPFLEPLGVLSHCGAVGFLPPGAAAPSGWALAPLGDTIKIYMELQGLVDPQSQLPRLAARRQKLQKQLDDLLNRTVSDGPAERQQRISSLQLELSKLDQAASHLQQLMEEAPDAREL.

The transit peptide at 1–15 (MPHLPLASFRPPLWG) directs the protein to the mitochondrion. A disordered region spans residues 27–52 (ALCTQPEPHGSPVSRRNREAKQKRLR). Positions 42 to 52 (RNREAKQKRLR) are enriched in basic and acidic residues. The short motif at 146-156 (PNVTGSLHIGH) is the 'HIGH' region element. The short motif at 659–663 (KMSKS) is the 'KMSKS' region element. Lysine 662 contacts ATP.

The protein belongs to the class-I aminoacyl-tRNA synthetase family.

The protein resides in the mitochondrion. The enzyme catalyses tRNA(Val) + L-valine + ATP = L-valyl-tRNA(Val) + AMP + diphosphate. Catalyzes the attachment of valine to tRNA(Val) in a two-step reaction: valine is first activated by ATP to form Val-AMP and then transferred to the acceptor end of tRNA(Val). The polypeptide is Valine--tRNA ligase, mitochondrial (Vars2) (Rattus norvegicus (Rat)).